The primary structure comprises 218 residues: Ras-related protein RABA1i (218 aa).

Position 20-27 (Gly20–Ser27) interacts with GTP. The short motif at Ser42 to Phe50 is the Effector region element. Residues Asp68–Gln72, Asn126–Asp129, and Ser156–Ala157 contribute to the GTP site. 2 S-geranylgeranyl cysteine lipidation sites follow: Cys215 and Cys216.

The protein belongs to the small GTPase superfamily. Rab family.

The protein localises to the cell membrane. Functionally, intracellular vesicle trafficking and protein transport. The sequence is that of Ras-related protein RABA1i (RABA1I) from Arabidopsis thaliana (Mouse-ear cress).